Reading from the N-terminus, the 408-residue chain is Secreted mono- and diacylglycerol lipase 2 (408 aa).

Positions 1–24 are cleaved as a signal peptide; the sequence is MRFKLADSLSLITVQLILATSTLA. Asn177 carries an N-linked (GlcNAc...) asparagine glycan. The Nucleophile role is filled by Ser217. Active-site residues include Asp283 and His374.

Belongs to the AB hydrolase superfamily. Lipase family. Class 3 subfamily.

The protein localises to the secreted. It catalyses the reaction a monoacylglycerol + H2O = glycerol + a fatty acid + H(+). The catalysed reaction is a diacylglycerol + H2O = a monoacylglycerol + a fatty acid + H(+). In terms of biological role, secreted mono- and diacylglycerol lipase involved in plant virulence. Has a substrate preference for p-nitrophenyl esters with a carbon chain length of C10 (p-nitrophenyl caprate). This Gibberella zeae (strain ATCC MYA-4620 / CBS 123657 / FGSC 9075 / NRRL 31084 / PH-1) (Wheat head blight fungus) protein is Secreted mono- and diacylglycerol lipase 2.